Here is a 460-residue protein sequence, read N- to C-terminus: Bifunctional protein GlmU (460 aa).

The tract at residues 1-232 is pyrophosphorylase; sequence MALNVVILAA…AIEVEGANNR (232 aa). Residues 8-11, Lys-22, Gln-73, 78-79, 100-102, Gly-137, Glu-157, Asn-172, and Asn-230 each bind UDP-N-acetyl-alpha-D-glucosamine; these read LAAG, GT, and YGD. Residue Asp-102 coordinates Mg(2+). Asn-230 lines the Mg(2+) pocket. Residues 233 to 253 are linker; it reads VQLAQLERAYQAREAEKLMLA. The segment at 254–460 is N-acetyltransferase; sequence GANLRDPSRI…GWQRPVKIKK (207 aa). Residues Arg-336 and Lys-354 each coordinate UDP-N-acetyl-alpha-D-glucosamine. The active-site Proton acceptor is His-366. UDP-N-acetyl-alpha-D-glucosamine contacts are provided by Tyr-369 and Asn-380. Acetyl-CoA contacts are provided by residues Ala-383, 389-390, Ser-408, Ala-426, and Arg-443; that span reads NY.

It in the N-terminal section; belongs to the N-acetylglucosamine-1-phosphate uridyltransferase family. The protein in the C-terminal section; belongs to the transferase hexapeptide repeat family. As to quaternary structure, homotrimer. Requires Mg(2+) as cofactor.

The protein resides in the cytoplasm. The catalysed reaction is alpha-D-glucosamine 1-phosphate + acetyl-CoA = N-acetyl-alpha-D-glucosamine 1-phosphate + CoA + H(+). It carries out the reaction N-acetyl-alpha-D-glucosamine 1-phosphate + UTP + H(+) = UDP-N-acetyl-alpha-D-glucosamine + diphosphate. It participates in nucleotide-sugar biosynthesis; UDP-N-acetyl-alpha-D-glucosamine biosynthesis; N-acetyl-alpha-D-glucosamine 1-phosphate from alpha-D-glucosamine 6-phosphate (route II): step 2/2. It functions in the pathway nucleotide-sugar biosynthesis; UDP-N-acetyl-alpha-D-glucosamine biosynthesis; UDP-N-acetyl-alpha-D-glucosamine from N-acetyl-alpha-D-glucosamine 1-phosphate: step 1/1. Its pathway is bacterial outer membrane biogenesis; LPS lipid A biosynthesis. Catalyzes the last two sequential reactions in the de novo biosynthetic pathway for UDP-N-acetylglucosamine (UDP-GlcNAc). The C-terminal domain catalyzes the transfer of acetyl group from acetyl coenzyme A to glucosamine-1-phosphate (GlcN-1-P) to produce N-acetylglucosamine-1-phosphate (GlcNAc-1-P), which is converted into UDP-GlcNAc by the transfer of uridine 5-monophosphate (from uridine 5-triphosphate), a reaction catalyzed by the N-terminal domain. In Shewanella baltica (strain OS185), this protein is Bifunctional protein GlmU.